The following is a 196-amino-acid chain: Putative 3-methyladenine DNA glycosylase (196 aa).

Belongs to the DNA glycosylase MPG family.

The sequence is that of Putative 3-methyladenine DNA glycosylase from Chlorobium phaeobacteroides (strain DSM 266 / SMG 266 / 2430).